The sequence spans 439 residues: Agnestins biosynthesis cluster transcriptional coactivator AgnL9 (439 aa).

Residues 79 to 149 (MTIQTQLLAC…EPGHITHSAL (71 aa)) form the HTH iclR-type domain. Positions 109-128 (MKDVSELIDVPENQLGRIVR) form a DNA-binding region, H-T-H motif.

It is found in the nucleus. Transcriptional coactivator; part of the gene cluster that mediates the biosynthesis of agnestins, dihydroxy-xanthone metabolites. The sequence is that of Agnestins biosynthesis cluster transcriptional coactivator AgnL9 from Paecilomyces divaricatus (Penicillium divaricatum).